Reading from the N-terminus, the 383-residue chain is Na(+)/H(+) antiporter NhaA (383 aa).

A run of 11 helical transmembrane segments spans residues 21–41, 56–76, 94–114, 123–143, 152–172, 175–195, 202–222, 258–278, 287–307, 326–346, and 355–375; these read AAGVMLMAASAIGMVFANSIW, LTMRGWINDALMALFFLLAGL, LLPGVAAIGGMVVPAIIYVAF, GWAIPTATDIAFALGVLALAG, VFLTALAIVDDLGAVIVIALF, GTLSVLPGAGVAAILGLLLML, TLFPYLLAGVPLWWLTLKSGI, FVILPLFGFANAGISLHGVTV, LGVGAALMLGKPLGVLGAVSI, IGIAFLCGIGFTMSLFIAILA, and QIKLGILSGSMLSGLCGYILL.

This sequence belongs to the NhaA Na(+)/H(+) (TC 2.A.33) antiporter family.

It is found in the cell inner membrane. The enzyme catalyses Na(+)(in) + 2 H(+)(out) = Na(+)(out) + 2 H(+)(in). Its function is as follows. Na(+)/H(+) antiporter that extrudes sodium in exchange for external protons. In Granulibacter bethesdensis (strain ATCC BAA-1260 / CGDNIH1), this protein is Na(+)/H(+) antiporter NhaA.